We begin with the raw amino-acid sequence, 202 residues long: UPF0102 protein Dde_1093 (202 aa).

It belongs to the UPF0102 family.

The chain is UPF0102 protein Dde_1093 from Oleidesulfovibrio alaskensis (strain ATCC BAA-1058 / DSM 17464 / G20) (Desulfovibrio alaskensis).